The chain runs to 389 residues: Succinate--CoA ligase [ADP-forming] subunit beta (389 aa).

Positions 9 to 236 (KELFAKHGVP…RDATDPLELK (228 aa)) constitute an ATP-grasp domain. ATP contacts are provided by residues lysine 45, 52–54 (GRG), serine 94, and glutamate 99. Mg(2+) contacts are provided by asparagine 191 and aspartate 205. Substrate is bound by residues asparagine 256 and 318–320 (GIT).

Belongs to the succinate/malate CoA ligase beta subunit family. Heterotetramer of two alpha and two beta subunits. It depends on Mg(2+) as a cofactor.

The enzyme catalyses succinate + ATP + CoA = succinyl-CoA + ADP + phosphate. It catalyses the reaction GTP + succinate + CoA = succinyl-CoA + GDP + phosphate. It participates in carbohydrate metabolism; tricarboxylic acid cycle; succinate from succinyl-CoA (ligase route): step 1/1. Functionally, succinyl-CoA synthetase functions in the citric acid cycle (TCA), coupling the hydrolysis of succinyl-CoA to the synthesis of either ATP or GTP and thus represents the only step of substrate-level phosphorylation in the TCA. The beta subunit provides nucleotide specificity of the enzyme and binds the substrate succinate, while the binding sites for coenzyme A and phosphate are found in the alpha subunit. In Rhodococcus erythropolis (strain PR4 / NBRC 100887), this protein is Succinate--CoA ligase [ADP-forming] subunit beta.